A 563-amino-acid polypeptide reads, in one-letter code: Putative cysteine ligase BshC (563 aa).

Residues 493–518 are a coiled coil; that stretch reads KEKTYRAGRRKHDELLQQLDKAELNL.

It belongs to the BshC family.

The chain is Putative cysteine ligase BshC from Chlorobaculum tepidum (strain ATCC 49652 / DSM 12025 / NBRC 103806 / TLS) (Chlorobium tepidum).